The sequence spans 261 residues: ATP synthase subunit a (261 aa).

Positions 1-14 (MSTLSFNNISTEVL) are cleaved as a propeptide — removed in mature form. The next 7 membrane-spanning stretches (helical) occupy residues 38 to 58 (ITNI…INLL), 96 to 116 (IYFP…LIGM), 126 to 146 (HFVV…ILGF), 153 to 173 (FFSL…LVLI), 191 to 211 (ANIL…YNIM), 214 to 234 (GIIF…FSGL), and 235 to 255 (ELGI…GYIK).

It belongs to the ATPase A chain family. In terms of assembly, F-type ATPases have 2 components, CF(1) - the catalytic core - and CF(0) - the membrane proton channel. CF(1) has five subunits: alpha(3), beta(3), gamma(1), delta(1), epsilon(1). CF(0) has three main subunits: a, b and c.

The protein localises to the mitochondrion inner membrane. Mitochondrial membrane ATP synthase (F(1)F(0) ATP synthase or Complex V) produces ATP from ADP in the presence of a proton gradient across the membrane which is generated by electron transport complexes of the respiratory chain. F-type ATPases consist of two structural domains, F(1) - containing the extramembraneous catalytic core and F(0) - containing the membrane proton channel, linked together by a central stalk and a peripheral stalk. During catalysis, ATP synthesis in the catalytic domain of F(1) is coupled via a rotary mechanism of the central stalk subunits to proton translocation. Key component of the proton channel; it may play a direct role in the translocation of protons across the membrane. The chain is ATP synthase subunit a (atp-6) from Neurospora crassa (strain ATCC 24698 / 74-OR23-1A / CBS 708.71 / DSM 1257 / FGSC 987).